Here is a 264-residue protein sequence, read N- to C-terminus: Thymidylate synthase (264 aa).

DUMP contacts are provided by residues arginine 21 and arginine 126–arginine 127. Cysteine 146 (nucleophile) is an active-site residue. Residues arginine 166–aspartate 169, asparagine 177, and histidine 207–tyrosine 209 contribute to the dUMP site. A (6R)-5,10-methylene-5,6,7,8-tetrahydrofolate-binding site is contributed by aspartate 169. Alanine 263 is a (6R)-5,10-methylene-5,6,7,8-tetrahydrofolate binding site.

Belongs to the thymidylate synthase family. Bacterial-type ThyA subfamily. As to quaternary structure, homodimer.

The protein localises to the cytoplasm. The enzyme catalyses dUMP + (6R)-5,10-methylene-5,6,7,8-tetrahydrofolate = 7,8-dihydrofolate + dTMP. It participates in pyrimidine metabolism; dTTP biosynthesis. Functionally, catalyzes the reductive methylation of 2'-deoxyuridine-5'-monophosphate (dUMP) to 2'-deoxythymidine-5'-monophosphate (dTMP) while utilizing 5,10-methylenetetrahydrofolate (mTHF) as the methyl donor and reductant in the reaction, yielding dihydrofolate (DHF) as a by-product. This enzymatic reaction provides an intracellular de novo source of dTMP, an essential precursor for DNA biosynthesis. The sequence is that of Thymidylate synthase from Rhodopseudomonas palustris (strain ATCC BAA-98 / CGA009).